Reading from the N-terminus, the 198-residue chain is Pyridoxal 5'-phosphate synthase subunit PdxT (198 aa).

49–51 (GES) contacts L-glutamine. The active-site Nucleophile is the cysteine 81. L-glutamine-binding positions include arginine 113 and 141 to 142 (IR). Catalysis depends on charge relay system residues histidine 177 and glutamate 179.

The protein belongs to the glutaminase PdxT/SNO family. In the presence of PdxS, forms a dodecamer of heterodimers. Only shows activity in the heterodimer.

It catalyses the reaction aldehydo-D-ribose 5-phosphate + D-glyceraldehyde 3-phosphate + L-glutamine = pyridoxal 5'-phosphate + L-glutamate + phosphate + 3 H2O + H(+). The catalysed reaction is L-glutamine + H2O = L-glutamate + NH4(+). Its pathway is cofactor biosynthesis; pyridoxal 5'-phosphate biosynthesis. Its function is as follows. Catalyzes the hydrolysis of glutamine to glutamate and ammonia as part of the biosynthesis of pyridoxal 5'-phosphate. The resulting ammonia molecule is channeled to the active site of PdxS. This chain is Pyridoxal 5'-phosphate synthase subunit PdxT, found in Mycobacterium leprae (strain TN).